The sequence spans 1632 residues: Guanine exchange factor for Rac 30 (1632 aa).

Residues 16 to 122 (NIQIDSFTSW…VIFLLIQKIK (107 aa)) form the Calponin-homology (CH) domain. Disordered stretches follow at residues 134 to 155 (QGET…TPTK) and 171 to 285 (FSHI…PTTG). Composition is skewed to low complexity over residues 137 to 154 (TTGT…TTPT) and 180 to 284 (QSSS…SPTT). 2 consecutive IQ domains span residues 388-417 (DLKK…KYKQ) and 432-461 (AYRG…LYRR). The DH domain maps to 460–638 (RRNEIVKEIL…KDVAEYVNEK (179 aa)). A compositionally biased stretch (low complexity) spans 775–795 (QINNQNNNQNNNQNNNLNNNN). Positions 775 to 798 (QINNQNNNQNNNQNNNLNNNNDDS) are disordered. The PH 1 domain occupies 940–1038 (DSEFSNVLEK…WISLIRLSIK (99 aa)). Low complexity predominate over residues 1138–1156 (STSASQSQSQSPSPSPSHS). Residues 1138–1161 (STSASQSQSQSPSPSPSHSINQKQ) form a disordered region. The region spanning 1271 to 1389 (NSCGDNINND…NNNNNNSQNG (119 aa)) is the Arf-GAP domain. Residues 1286–1309 (CAECGASDPSWVSINYGVVVCLDC) form a C4-type zinc finger. Low complexity-rich tracts occupy residues 1380-1402 (NNNN…TSTT), 1409-1431 (STPT…TTQT), and 1441-1481 (SSPT…TTPT). Residues 1380-1521 (NNNNNNSQNG…SSHAITERKT (142 aa)) are disordered. The segment covering 1500-1515 (DTSNGKGTWSRGSSHA) has biased composition (polar residues). Positions 1532-1631 (KKEHQGYLFK…WLDVLSSHTT (100 aa)) constitute a PH 2 domain.

It localises to the membrane. It is found in the cytoplasmic vesicle. The protein localises to the phagosome membrane. GTPase-activating protein for Rac involved in streaming and development. In Dictyostelium discoideum (Social amoeba), this protein is Guanine exchange factor for Rac 30 (gxcDD).